Consider the following 60-residue polypeptide: Large ribosomal subunit protein uL30 (60 aa).

This sequence belongs to the universal ribosomal protein uL30 family. As to quaternary structure, part of the 50S ribosomal subunit.

This Burkholderia mallei (strain NCTC 10247) protein is Large ribosomal subunit protein uL30.